The chain runs to 85 residues: Arminin 2b (85 aa).

A signal peptide spans 1–18; that stretch reads MKTVFAILFLAFIALTYA. A propeptide spanning residues 19–57 is cleaved from the precursor; it reads RSYEDVKEEIKNEIEKEILEDLEEESDELNDKSKEINDA. A82 bears the Alanine amide mark.

It belongs to the arminin family. In terms of tissue distribution, expressed in entodermal epithelium along the body column.

Its subcellular location is the secreted. The protein localises to the target cell membrane. Antimicrobial peptide with a broad-spectrum antimicrobial activity. Keeps its antibacterial activity under a wide range of salt concentrations that mimic physiological conditions of human blood, which is surprising, since Hydra is an obligate freshwater animal with nearly no salt tolerance. Does not affect red blood cells. In Hydra vulgaris (Hydra), this protein is Arminin 2b.